A 321-amino-acid polypeptide reads, in one-letter code: Malate dehydrogenase (321 aa).

Residues 10–15 and Asp-34 each bind NAD(+); that span reads GAGQIG. Substrate-binding residues include Arg-83 and Arg-89. NAD(+) contacts are provided by residues Asn-96 and 119–121; that span reads VTN. Substrate is bound by residues Asn-121 and Arg-152. The Proton acceptor role is filled by His-176.

It belongs to the LDH/MDH superfamily. MDH type 3 family.

The enzyme catalyses (S)-malate + NAD(+) = oxaloacetate + NADH + H(+). Its function is as follows. Catalyzes the reversible oxidation of malate to oxaloacetate. The polypeptide is Malate dehydrogenase (Azorhizobium caulinodans (strain ATCC 43989 / DSM 5975 / JCM 20966 / LMG 6465 / NBRC 14845 / NCIMB 13405 / ORS 571)).